A 180-amino-acid chain; its full sequence is NAD(P)H-quinone oxidoreductase subunit 6, chloroplastic (180 aa).

5 consecutive transmembrane segments (helical) span residues Ile-10 to Thr-30, Ile-32 to Leu-52, Phe-57 to Ala-77, Val-95 to Ile-115, and Phe-153 to Ile-173.

It belongs to the complex I subunit 6 family. NDH is composed of at least 16 different subunits, 5 of which are encoded in the nucleus.

The protein resides in the plastid. It localises to the chloroplast thylakoid membrane. It catalyses the reaction a plastoquinone + NADH + (n+1) H(+)(in) = a plastoquinol + NAD(+) + n H(+)(out). The enzyme catalyses a plastoquinone + NADPH + (n+1) H(+)(in) = a plastoquinol + NADP(+) + n H(+)(out). NDH shuttles electrons from NAD(P)H:plastoquinone, via FMN and iron-sulfur (Fe-S) centers, to quinones in the photosynthetic chain and possibly in a chloroplast respiratory chain. The immediate electron acceptor for the enzyme in this species is believed to be plastoquinone. Couples the redox reaction to proton translocation, and thus conserves the redox energy in a proton gradient. The polypeptide is NAD(P)H-quinone oxidoreductase subunit 6, chloroplastic (ndhG) (Cycas taitungensis (Prince sago)).